Reading from the N-terminus, the 172-residue chain is Ribosome maturation factor RimM (172 aa).

The region spanning 96 to 168 (DGEFYYHEII…RIEVELMEGL (73 aa)) is the PRC barrel domain.

The protein belongs to the RimM family. In terms of assembly, binds ribosomal protein uS19.

It is found in the cytoplasm. Functionally, an accessory protein needed during the final step in the assembly of 30S ribosomal subunit, possibly for assembly of the head region. Essential for efficient processing of 16S rRNA. May be needed both before and after RbfA during the maturation of 16S rRNA. It has affinity for free ribosomal 30S subunits but not for 70S ribosomes. The protein is Ribosome maturation factor RimM of Streptococcus thermophilus (strain CNRZ 1066).